We begin with the raw amino-acid sequence, 46 residues long: Mu-segestritoxin-Sf1h (46 aa).

Disulfide bonds link C3–C19, C10–C22, C18–C42, and C24–C40. Positions 31–33 are keys region for toxin activity; that stretch reads RPW.

This sequence belongs to the neurotoxin 16 (SFI) family. As to expression, expressed by the venom gland.

Its subcellular location is the secreted. Its function is as follows. Insecticidal toxin. It inhibits insect voltage-gated sodium channels (Nav) by partially blocking the channel pore in DUM neurons from the American cockroach, not by acting as a gating modifier. The inhibition is only partially reversible after prolonged washout. In vivo, the toxin causes flaccid paralysis followed by death when injected into Heliothis virescens larvae. It also causes uncoordinated movements followed by full paralysis to sheep blowflies (Lucilia cuprina). When the toxin is fused to snowdrop lectin, it is orally active against larvae of the tomato moth (Laconobia oleracea), the rice brown planthopper (Nilaparvata lugens), and the peach-potato aphid (Myzus persicae). The protein is Mu-segestritoxin-Sf1h of Segestria florentina (Tube-web spider).